Reading from the N-terminus, the 76-residue chain is Conotoxin Vc6.3 (76 aa).

Positions Met-1–Ala-22 are cleaved as a signal peptide. Residues Asp-23–Glu-50 constitute a propeptide that is removed on maturation. Cystine bridges form between Cys-52–Cys-66, Cys-59–Cys-70, and Cys-67–Cys-75.

Belongs to the conotoxin O1 superfamily. In terms of tissue distribution, expressed by the venom duct.

It is found in the secreted. The chain is Conotoxin Vc6.3 from Conus victoriae (Queen Victoria cone).